The chain runs to 900 residues: Zinc finger protein 62 homolog (900 aa).

The interval 1–97 (MSHLKTSTED…EASEKSLHLS (97 aa)) is disordered. Residue lysine 5 forms a Glycyl lysine isopeptide (Lys-Gly) (interchain with G-Cter in SUMO2) linkage. A compositionally biased stretch (acidic residues) spans 9–18 (EDEEPTEEYE). The span at 47–73 (SKVENQQKKPVENRMKEDKSSIREAIS) shows a compositional bias: basic and acidic residues. Glycyl lysine isopeptide (Lys-Gly) (interchain with G-Cter in SUMO2) cross-links involve residues lysine 48, lysine 62, lysine 65, lysine 82, and lysine 92. Residues 83–94 (TEQEGEASEKSL) are compositionally biased toward basic and acidic residues. C2H2-type zinc fingers lie at residues 225–247 (CKCD…KRIH), 253–275 (YECG…KRIH), 281–303 (YECD…KRIH), 309–331 (YECD…KSIH), 337–359 (YKCD…KVIH), 365–387 (YECD…KRIH), 393–415 (YKCD…KSIH), 421–443 (HECK…RTIH), 449–471 (YVCD…RRLH), 477–499 (YKCD…KGIH), 505–527 (YKCS…KRIH), 533–555 (FGCD…KRIH), and 561–583 (YKCE…KSVH). A Glycyl lysine isopeptide (Lys-Gly) (interchain with G-Cter in SUMO2) cross-link involves residue lysine 587. C2H2-type zinc fingers lie at residues 589–611 (FKCD…KKVH), 617–639 (YKCD…RRVH), 645–667 (YECD…KRIH), 673–695 (YECD…KSTH), 701–723 (HTCD…KRVH), 729–751 (FKCV…KRIH), 757–779 (YVCD…KRIH), 785–807 (YECD…KSVH), 813–834 (YNCE…KRIH), and 840–862 (YRCN…KRTH). A Glycyl lysine isopeptide (Lys-Gly) (interchain with G-Cter in SUMO2) cross-link involves residue lysine 748. A Glycyl lysine isopeptide (Lys-Gly) (interchain with G-Cter in SUMO2) cross-link involves residue lysine 882.

The protein belongs to the krueppel C2H2-type zinc-finger protein family.

The protein resides in the nucleus. May play a role in differentiating skeletal muscle. The protein is Zinc finger protein 62 homolog (ZFP62) of Homo sapiens (Human).